The primary structure comprises 431 residues: Glutamate-1-semialdehyde 2,1-aminomutase (431 aa).

K269 carries the post-translational modification N6-(pyridoxal phosphate)lysine.

It belongs to the class-III pyridoxal-phosphate-dependent aminotransferase family. HemL subfamily. Homodimer. Pyridoxal 5'-phosphate is required as a cofactor.

The protein resides in the cytoplasm. It catalyses the reaction (S)-4-amino-5-oxopentanoate = 5-aminolevulinate. It functions in the pathway porphyrin-containing compound metabolism; protoporphyrin-IX biosynthesis; 5-aminolevulinate from L-glutamyl-tRNA(Glu): step 2/2. It participates in porphyrin-containing compound metabolism; chlorophyll biosynthesis. The protein is Glutamate-1-semialdehyde 2,1-aminomutase of Prosthecochloris aestuarii (strain DSM 271 / SK 413).